A 1303-amino-acid chain; its full sequence is Alpha,alpha-trehalose-phosphate synthase [UDP-forming] 2 (1303 aa).

Disordered regions lie at residues 1 to 48 and 205 to 251; these read MTVV…NNTT and LQRR…FRGK. The span at 212–221 shows a compositional bias: low complexity; sequence SSRGGSLRGS.

In the N-terminal section; belongs to the glycosyltransferase 20 family. It in the C-terminal section; belongs to the gob-1 trehalose phosphatase family.

The enzyme catalyses D-glucose 6-phosphate + UDP-alpha-D-glucose = alpha,alpha-trehalose 6-phosphate + UDP + H(+). Functionally, catalyzes the production of trehalose from glucose-6-phosphate and UDP-alpha-D-glucose in a 2 step process. This is Alpha,alpha-trehalose-phosphate synthase [UDP-forming] 2 (tps-2) from Aphelenchoides avenae (Mycophagous nematode worm).